Here is a 375-residue protein sequence, read N- to C-terminus: MKPLLGTFYLLGMLVPGWLGYDRSLTQQRQEVVDKVVSPWSILETYSYNRYHPMGEIYQWMSEIREKYTEVVTQHFLGMTYESRPMYYLKISQPSSNPKKIIWMDCGIHAREWIAPAFCQWFVKEILQNYEDNSRIRRLLKNLDFYVLPVLNIDGYIYTWTTDRLWRKSRSSHNNGTCFGTDLNRNFDASWCSIGASHNCESLTFCGTGPMSEPETKAVSSFIESKKENIACFLTMHSYGQLILVPYGYTKNKSNNHEELIQVGQKAANALKAKHGTNYRVGSSADILYATSGSSRDWARDIGIPFSYTFELRDNGTYGFVLPETQIQATCEETMEAVLSVLDDVYEKYWYTNSARKAKSTALVLGLLMSFMSLL.

A signal peptide spans 1 to 20 (MKPLLGTFYLLGMLVPGWLG). Residues 50–345 (RYHPMGEIYQ…EAVLSVLDDV (296 aa)) enclose the Peptidase M14 domain. Zn(2+) contacts are provided by H109 and E112. A glycan (N-linked (GlcNAc...) asparagine) is linked at N175. Position 237 (H237) interacts with Zn(2+). N252 is a glycosylation site (N-linked (GlcNAc...) asparagine). E311 acts as the Proton donor/acceptor in catalysis. N315 carries N-linked (GlcNAc...) asparagine glycosylation. A lipid anchor (GPI-anchor amidated serine) is attached at S354. A propeptide spans 355-375 (ARKAKSTALVLGLLMSFMSLL) (removed in mature form).

The protein belongs to the peptidase M14 family. Requires Zn(2+) as cofactor.

It is found in the apical cell membrane. Carboxypeptidase which preferentially cleaves C-terminal acidic residues from peptides and proteins. Can also cleave C-terminal hydrophobic amino acids, with a preference for small residues over large residues. The sequence is that of Carboxypeptidase O from Bos taurus (Bovine).